The sequence spans 195 residues: Cysteine/O-acetylserine efflux protein (195 aa).

Over 1-9 (MTPILLSAF) the chain is Periplasmic. Residues 10–32 (WTYTLITAMTPGPNNILALSSAT) form a helical membrane-spanning segment. The Cytoplasmic segment spans residues 33–46 (SHGFRQSTRVLAGM). A helical transmembrane segment spans residues 47–67 (SLGFLIVMLLCAGISFSLAVI). Topologically, residues 68–69 (DP) are periplasmic. A helical transmembrane segment spans residues 70–90 (AAVHLLSWAGAAYIVWLAWKI). Residues 91 to 104 (ATSPTKEDGLQAKP) lie on the Cytoplasmic side of the membrane. A helical transmembrane segment spans residues 105 to 125 (ISFWASFALQFVNVKIILYGV). The Periplasmic segment spans residues 126 to 141 (TALSTFVLPQTQALSW). The helical transmembrane segment at 142–162 (VVGVSVLLAMIGTFGNVCWAL) threads the bilayer. Topologically, residues 163 to 176 (AGHLFQRLFRQYGR) are cytoplasmic. A helical membrane pass occupies residues 177-194 (QLNIVLALLLVYCAVRIF). A topological domain (periplasmic) is located at residue Tyr195.

This sequence belongs to the Rht family.

It is found in the cell inner membrane. The enzyme catalyses O-acetyl-L-serine(in) = O-acetyl-L-serine(out). It carries out the reaction L-cysteine(in) = L-cysteine(out). In terms of biological role, exporter of O-acetylserine (OAS) and cysteine. In Shigella flexneri serotype 5b (strain 8401), this protein is Cysteine/O-acetylserine efflux protein (eamB).